Consider the following 556-residue polypeptide: Methyltransferase/ribosomally synthesized type II borosin cyclic peptide precursor pgiMA1 (556 aa).

Residues 1-250 (MSSASSDSNT…SCSTLYVPPL (250 aa)) are methyltransferase domain. Active-site residues include R74, Y78, and Y100. S-adenosyl-L-methionine is bound by residues Y100, H102, V105, Q174, G212, S243, and T244. Residues 251 to 377 (THANKFSGNM…GAVFGVMKLR (127 aa)) are clasp domain. The segment at 378–386 (ASEVANEQG) is precursor leader. 10 positions are modified to N-methylaspartate: D421, D434, D447, D460, D473, D486, D499, D512, D525, and D538. Residues 543-556 (AVPVPDHVAGIPCM) constitute a propeptide that is removed on maturation.

It in the N-terminal section; belongs to the precorrin methyltransferase family. Homodimer. In terms of processing, pgiMA1 automethylates at Asp-421, Asp-434, Asp-447, Asp-460, Asp-473, Asp-486, Asp-499, Asp-512, Asp-525 and Asp-538 before being processed, probably by the M64 family peptidase found in the genes surrounding PgiMA1, to release methylated peptides which then undergos macrocyclization with the N-terminus of the modified core peptides. Peptide backbone alpha-N-methylations change the physicochemical properties of amide bonds to provide structural constraints and other favorable characteristics including biological membrane permeability to peptides.

It participates in secondary metabolite biosynthesis. Fusion protein of the methyltransferase pgiM1 and 12 type II borosin core peptides; part of the gene cluster that mediates the biosynthesis of a type II borosin, a highly methylated cyclic peptide with potent biological activities. Type II borosins derive from the C-terminus of the fusion protein, and it is the same protein that methylates its own C-terminus using S-adenosyl methionine (SAM). The C-terminus is subsequently cleaved off and macrocyclized by a prolyloligopeptidase to give the final product. The protein is Methyltransferase/ribosomally synthesized type II borosin cyclic peptide precursor pgiMA1 of Phlebiopsis gigantea (strain 11061_1 CR5-6) (White-rot fungus).